The primary structure comprises 561 residues: MSDNIPSFRWVQSLRRGLSNWTHPVKADVLSDTRALLSALDFHKVAQVQRMVRKDKRTDSDLTKLRDMNKEVDALMNMRSVQRDNVLKVGGLAKEELMELASDLDKLRKKVTRTEGLSQPGVYEGNLTNTQLEQRAEILRSMGFANARPAGNRDGVVKVWDIKDNTLLINQFGSMPALTIACMTEQGGEQLNDVVQALSALGLLYTVKFPNMTDLEKLTQQHSALKIISHEPSALNISGYNLSLSAAVKAAACMIDGGNMLETIQVKPSMFSTLIKSLLQIKNREGMFVSTTPGQRNPYENLLYKICLSGDGWPYIGSRSQVQGRAWDNTTVDLDSKPSAIQPPVRNGGSPDLKQIPKEKEDTVVSSIQMLDPRATTWIDIEGTPNDPVEMAIYQPDTGNYIHCYRFPHDEKSFKEQSKYSHGLLLKDLADAQPGLISSIIRHLPQNMVFTAQGSDDIIRLFEMHGRRDLKVLDVKLSAEQARTFEDEIWERYNQLCTKHKGLVIKKKKKGAVQTTANPHCALLDTIMFDATVTGWVRDQKPMRCLPIDTLYRNNTDLINL.

Residues 52 to 237 are binding site for the cap structure m7GTP; the sequence is VRKDKRTDSD…ISHEPSALNI (186 aa). The segment at 336–355 is disordered; the sequence is SKPSAIQPPVRNGGSPDLKQ. The Mn(2+) site is built by Asp-380 and Glu-382. The Zn(2+) site is built by Glu-390, Cys-497, His-500, and Cys-521. Asp-525 lines the Mn(2+) pocket.

It belongs to the arenaviridae nucleocapsid protein family. Homomultimerizes to form the nucleocapsid. Binds to viral genomic RNA. Interacts with glycoprotein G2. Interacts with protein Z; this interaction probably directs the encapsidated genome to budding sites. Interacts with protein L; this interaction does not interfere with Z-L interaction. Interacts with host IKBKE (via Protein kinase domain); the interaction inhibits IKBKE kinase activity.

It localises to the virion. The protein localises to the host cytoplasm. In terms of biological role, encapsidates the genome, protecting it from nucleases. The encapsidated genomic RNA is termed the nucleocapsid (NC). Serves as template for viral transcription and replication. The increased presence of protein N in host cell does not seem to trigger the switch from transcription to replication as observed in other negative strain RNA viruses. Through the interaction with host IKBKE, strongly inhibits the phosphorylation and nuclear translocation of host IRF3, a protein involved in interferon activation pathway, leading to the inhibition of interferon-beta and IRF3-dependent promoters activation. Also encodes a functional 3'-5' exoribonuclease that degrades preferentially dsRNA substrates and thereby participates in the suppression of interferon induction. This Cavia cutleri (Guinea pig) protein is Nucleoprotein.